The primary structure comprises 335 residues: MERIVEVEKFSEESSFETTLRPSDWDEYIGQEKIKNNLKVFIQACKKRGETLDHVLFFGPPGLGKTTLSLIIASQMEANIKITAAPMIEKSGDLAAILTNLEEGDILFIDEIHRLSPAIEEILYPAMEDFRLDIIIGSGPAAQTIKIDLPKFTLIGATTRAGMLSSPLRDRFGMHFRLQFYTPQELAQIITNAANKLSKDIDAEAALEIAKRSRGTPRIALRLLKRVRDFSDVADEKTITLKRTQKALEALGVDERGFDELDLKLLKLLADAKGKPLGLSTIAAALSEDEGTIEDVIEPFLLANGYLERTARGRMATLKTYEILKLTPNIQNSLF.

The large ATPase domain (RuvB-L) stretch occupies residues 1-181; that stretch reads MERIVEVEKF…FGMHFRLQFY (181 aa). Residues Leu20, Arg21, Gly62, Lys65, Thr66, Thr67, 128 to 130, Arg171, Tyr181, and Arg218 contribute to the ATP site; that span reads EDF. Thr66 contacts Mg(2+). Positions 182–252 are small ATPAse domain (RuvB-S); sequence TPQELAQIIT…RTQKALEALG (71 aa). Positions 255–335 are head domain (RuvB-H); it reads ERGFDELDLK…LTPNIQNSLF (81 aa). 2 residues coordinate DNA: Arg309 and Arg314.

It belongs to the RuvB family. As to quaternary structure, homohexamer. Forms an RuvA(8)-RuvB(12)-Holliday junction (HJ) complex. HJ DNA is sandwiched between 2 RuvA tetramers; dsDNA enters through RuvA and exits via RuvB. An RuvB hexamer assembles on each DNA strand where it exits the tetramer. Each RuvB hexamer is contacted by two RuvA subunits (via domain III) on 2 adjacent RuvB subunits; this complex drives branch migration. In the full resolvosome a probable DNA-RuvA(4)-RuvB(12)-RuvC(2) complex forms which resolves the HJ.

Its subcellular location is the cytoplasm. The enzyme catalyses ATP + H2O = ADP + phosphate + H(+). Functionally, the RuvA-RuvB-RuvC complex processes Holliday junction (HJ) DNA during genetic recombination and DNA repair, while the RuvA-RuvB complex plays an important role in the rescue of blocked DNA replication forks via replication fork reversal (RFR). RuvA specifically binds to HJ cruciform DNA, conferring on it an open structure. The RuvB hexamer acts as an ATP-dependent pump, pulling dsDNA into and through the RuvAB complex. RuvB forms 2 homohexamers on either side of HJ DNA bound by 1 or 2 RuvA tetramers; 4 subunits per hexamer contact DNA at a time. Coordinated motions by a converter formed by DNA-disengaged RuvB subunits stimulates ATP hydrolysis and nucleotide exchange. Immobilization of the converter enables RuvB to convert the ATP-contained energy into a lever motion, pulling 2 nucleotides of DNA out of the RuvA tetramer per ATP hydrolyzed, thus driving DNA branch migration. The RuvB motors rotate together with the DNA substrate, which together with the progressing nucleotide cycle form the mechanistic basis for DNA recombination by continuous HJ branch migration. Branch migration allows RuvC to scan DNA until it finds its consensus sequence, where it cleaves and resolves cruciform DNA. The chain is Holliday junction branch migration complex subunit RuvB from Nitratiruptor sp. (strain SB155-2).